The primary structure comprises 115 residues: Holo-[acyl-carrier-protein] synthase (115 aa).

Mg(2+)-binding residues include D6 and E51.

This sequence belongs to the P-Pant transferase superfamily. AcpS family. The cofactor is Mg(2+).

The protein resides in the cytoplasm. It carries out the reaction apo-[ACP] + CoA = holo-[ACP] + adenosine 3',5'-bisphosphate + H(+). Its function is as follows. Transfers the 4'-phosphopantetheine moiety from coenzyme A to a Ser of acyl-carrier-protein. This chain is Holo-[acyl-carrier-protein] synthase, found in Campylobacter jejuni subsp. doylei (strain ATCC BAA-1458 / RM4099 / 269.97).